A 195-amino-acid polypeptide reads, in one-letter code: Cysteine/O-acetylserine efflux protein (195 aa).

The Periplasmic portion of the chain corresponds to methionine 1–serine 7. A helical membrane pass occupies residues alanine 8 to leucine 28. The Cytoplasmic portion of the chain corresponds to serine 29–methionine 46. A helical membrane pass occupies residues serine 47 to isoleucine 67. At aspartate 68–proline 69 the chain is on the periplasmic side. The helical transmembrane segment at alanine 70–isoleucine 90 threads the bilayer. Residues alanine 91–proline 104 lie on the Cytoplasmic side of the membrane. The helical transmembrane segment at isoleucine 105–valine 125 threads the bilayer. The Periplasmic portion of the chain corresponds to threonine 126–tryptophan 141. Residues valine 142–leucine 162 traverse the membrane as a helical segment. The Cytoplasmic segment spans residues alanine 163 to arginine 176. Residues glutamine 177–phenylalanine 194 traverse the membrane as a helical segment. Residue tyrosine 195 is a topological domain, periplasmic.

Belongs to the Rht family.

The protein localises to the cell inner membrane. The enzyme catalyses O-acetyl-L-serine(in) = O-acetyl-L-serine(out). The catalysed reaction is L-cysteine(in) = L-cysteine(out). Functionally, exporter of O-acetylserine (OAS) and cysteine. The polypeptide is Cysteine/O-acetylserine efflux protein (eamB) (Escherichia coli O9:H4 (strain HS)).